The chain runs to 66 residues: Large ribosomal subunit protein uL29 (66 aa).

The protein belongs to the universal ribosomal protein uL29 family.

The protein is Large ribosomal subunit protein uL29 of Agrobacterium fabrum (strain C58 / ATCC 33970) (Agrobacterium tumefaciens (strain C58)).